Here is a 455-residue protein sequence, read N- to C-terminus: 3-isopropylmalate dehydratase large subunit (455 aa).

Residues cysteine 336, cysteine 396, and cysteine 399 each contribute to the [4Fe-4S] cluster site.

It belongs to the aconitase/IPM isomerase family. LeuC type 1 subfamily. As to quaternary structure, heterodimer of LeuC and LeuD. It depends on [4Fe-4S] cluster as a cofactor.

The catalysed reaction is (2R,3S)-3-isopropylmalate = (2S)-2-isopropylmalate. Its pathway is amino-acid biosynthesis; L-leucine biosynthesis; L-leucine from 3-methyl-2-oxobutanoate: step 2/4. In terms of biological role, catalyzes the isomerization between 2-isopropylmalate and 3-isopropylmalate, via the formation of 2-isopropylmaleate. This chain is 3-isopropylmalate dehydratase large subunit, found in Staphylococcus aureus (strain MRSA252).